The following is a 101-amino-acid chain: Small ribosomal subunit protein uS14 (101 aa).

The span at 1-10 (MAKKSSIEKN) shows a compositional bias: basic and acidic residues. The segment at 1–24 (MAKKSSIEKNNRRKRLTKNAAPKR) is disordered. Over residues 11-24 (NRRKRLTKNAAPKR) the composition is skewed to basic residues.

The protein belongs to the universal ribosomal protein uS14 family. In terms of assembly, part of the 30S ribosomal subunit. Contacts proteins S3 and S10.

In terms of biological role, binds 16S rRNA, required for the assembly of 30S particles and may also be responsible for determining the conformation of the 16S rRNA at the A site. The chain is Small ribosomal subunit protein uS14 from Rhodopseudomonas palustris (strain BisB18).